The primary structure comprises 257 residues: 3-methyl-2-oxobutanoate hydroxymethyltransferase (257 aa).

The Mg(2+) site is built by Asp-44 and Asp-83. Residues 44–45 (DS), Asp-83, and Lys-113 contribute to the 3-methyl-2-oxobutanoate site. Glu-115 serves as a coordination point for Mg(2+). The active-site Proton acceptor is the Glu-182.

This sequence belongs to the PanB family. Homodecamer; pentamer of dimers. Mg(2+) is required as a cofactor.

Its subcellular location is the cytoplasm. The catalysed reaction is 3-methyl-2-oxobutanoate + (6R)-5,10-methylene-5,6,7,8-tetrahydrofolate + H2O = 2-dehydropantoate + (6S)-5,6,7,8-tetrahydrofolate. Its pathway is cofactor biosynthesis; (R)-pantothenate biosynthesis; (R)-pantoate from 3-methyl-2-oxobutanoate: step 1/2. Its function is as follows. Catalyzes the reversible reaction in which hydroxymethyl group from 5,10-methylenetetrahydrofolate is transferred onto alpha-ketoisovalerate to form ketopantoate. This chain is 3-methyl-2-oxobutanoate hydroxymethyltransferase, found in Rippkaea orientalis (strain PCC 8801 / RF-1) (Cyanothece sp. (strain PCC 8801)).